The following is a 120-amino-acid chain: Large ribosomal subunit protein bL20c (120 aa).

The protein belongs to the bacterial ribosomal protein bL20 family.

The protein resides in the plastid. Functionally, binds directly to 23S ribosomal RNA and is necessary for the in vitro assembly process of the 50S ribosomal subunit. It is not involved in the protein synthesizing functions of that subunit. This is Large ribosomal subunit protein bL20c (rpl20) from Cuscuta gronovii (Common dodder).